A 221-amino-acid chain; its full sequence is Flagellar L-ring protein 2 (221 aa).

Residues 1 to 16 form the signal peptide; sequence MKRFLILTPMVLALCG. Cys-17 is lipidated: N-palmitoyl cysteine. Cys-17 carries the S-diacylglycerol cysteine lipid modification.

Belongs to the FlgH family. The basal body constitutes a major portion of the flagellar organelle and consists of four rings (L,P,S, and M) mounted on a central rod.

It is found in the cell outer membrane. The protein localises to the bacterial flagellum basal body. In terms of biological role, assembles around the rod to form the L-ring and probably protects the motor/basal body from shearing forces during rotation. This is Flagellar L-ring protein 2 from Yersinia pseudotuberculosis serotype I (strain IP32953).